Reading from the N-terminus, the 87-residue chain is Small ribosomal subunit protein bS20 (87 aa).

This sequence belongs to the bacterial ribosomal protein bS20 family.

Functionally, binds directly to 16S ribosomal RNA. This chain is Small ribosomal subunit protein bS20, found in Finegoldia magna (strain ATCC 29328 / DSM 20472 / WAL 2508) (Peptostreptococcus magnus).